A 193-amino-acid polypeptide reads, in one-letter code: Thioredoxin reductase-like selenoprotein T1a (193 aa).

The N-terminal stretch at 1-21 (MRWLPFSALLLWALCLHSASA) is a signal peptide. The cysteinyl-selenocysteine (Cys-Sec) cross-link spans 44-47 (CVSU). Position 47 (U47) is a non-standard amino acid, selenocysteine. Residues 83–101 (IASFLSMFKLLLIGVIILG) form a helical membrane-spanning segment.

The protein belongs to the SelWTH family. Selenoprotein T subfamily. Post-translationally, may contain a selenide-sulfide bond between Cys-44 and Sec-47. This bond is speculated to serve as redox-active pair. In terms of tissue distribution, expressed in embryonic olfactory vesicles and the photoreceptor cell layer of the embryonic retina. Low level in embryonic epiphysis.

It localises to the endoplasmic reticulum membrane. The enzyme catalyses [thioredoxin]-dithiol + NADP(+) = [thioredoxin]-disulfide + NADPH + H(+). Functionally, selenoprotein with thioredoxin reductase-like oxidoreductase activity. This is Thioredoxin reductase-like selenoprotein T1a from Danio rerio (Zebrafish).